A 54-amino-acid chain; its full sequence is uncharacterized protein (54 aa).

2 stretches are compositionally biased toward basic and acidic residues: residues 1–19 (MTEK…HNDL) and 26–54 (EELK…YDTK). The tract at residues 1–54 (MTEKKQQNKPNENPEHNDLTDPIPNEELKENMNDEKHKRQQRDNSQSERDYDTK) is disordered.

This is an uncharacterized protein from Bacillus subtilis (strain 168).